A 137-amino-acid chain; its full sequence is Large ribosomal subunit protein uL16 (137 aa).

Belongs to the universal ribosomal protein uL16 family. As to quaternary structure, part of the 50S ribosomal subunit.

Binds 23S rRNA and is also seen to make contacts with the A and possibly P site tRNAs. The chain is Large ribosomal subunit protein uL16 from Nitrobacter winogradskyi (strain ATCC 25391 / DSM 10237 / CIP 104748 / NCIMB 11846 / Nb-255).